A 346-amino-acid polypeptide reads, in one-letter code: Glucose-6-phosphatase 3 (346 aa).

Over 1–24 (MESTLSAGIIMAEALQNRLPGLEN) the chain is Lumenal. A helical transmembrane segment spans residues 25–45 (MWLWVTFLGDPKNLFQFCFPA). Over 46–56 (AYYASRRLGIS) the chain is Cytoplasmic. The helical transmembrane segment at 57–77 (VLWITFIAEWLNLVFKWFLFG) threads the bilayer. At 78–108 (DRPFWWVHESGYSTQTPIQIHQFPSSCETGP) the chain is on the lumenal side. Arg-79 is a binding site for substrate. Residues 109-129 (GSPSGHCMITGAALWPVMTAI) traverse the membrane as a helical segment. His-114 (proton donor) is an active-site residue. Residues 130–138 (SSQVASRSR) lie on the Cytoplasmic side of the membrane. Residues 139–159 (SPWVRVIPGLAYCTFLLAVGL) form a helical membrane-spanning segment. The Lumenal segment spans residues 160-167 (SRVFLLAH). A substrate-binding site is contributed by Arg-161. His-167 (nucleophile) is an active-site residue. Residues 168–186 (FPHQVLGGLIVGAALGWLM) traverse the membrane as a helical segment. Topologically, residues 187–197 (SPRVPMERELS) are cytoplasmic. The chain crosses the membrane as a helical span at residues 198–218 (FYGLTALALMLGASLMYWTLF). Residues 219-254 (TLGLDLSWSINLASKWCERPEWVHMDSRPFASLSRD) lie on the Lumenal side of the membrane. Residues 255-273 (SGSALGLGIALHTPCYAQI) traverse the membrane as a helical segment. Residues 274–283 (RRAHLGNGQK) are Cytoplasmic-facing. Residues 284 to 304 (IACFVLAMGLLVFLEWLGYPP) traverse the membrane as a helical segment. Residues 305-307 (QIS) lie on the Lumenal side of the membrane. The helical transmembrane segment at 308 to 328 (LFYIFNFLKYTLWPCLVLALV) threads the bilayer. Residues 329–346 (PWVVHTLSDQEAPPIRSS) are Cytoplasmic-facing.

It belongs to the glucose-6-phosphatase family. Widely expressed. Highly expressed in heart and testis and to a lower extent in spleen, stomach, small intestine, skeletal muscle and uterus. Expressed in muscle, brain, thymus, lung, kidney, spleen and pancreas (at protein level). In the brain, expressed in astrocytes (at protein level).

It is found in the endoplasmic reticulum membrane. The catalysed reaction is D-glucose 6-phosphate + H2O = D-glucose + phosphate. Its pathway is carbohydrate biosynthesis; gluconeogenesis. Inhibited by vanadate. Hydrolyzes glucose-6-phosphate to glucose in the endoplasmic reticulum. May form with the glucose-6-phosphate transporter (SLC37A4/G6PT) a ubiquitously expressed complex responsible for glucose production through glycogenolysis and gluconeogenesis. Probably required for normal neutrophil function. This is Glucose-6-phosphatase 3 (G6pc3) from Mus musculus (Mouse).